A 168-amino-acid polypeptide reads, in one-letter code: Small ribosomal subunit protein uS9 (168 aa).

The segment covering 1-29 (MAQNEELTAEAVEAEETLTSYTSESTSAE) has biased composition (low complexity). Residues 1 to 36 (MAQNEELTAEAVEAEETLTSYTSESTSAEDAPKKER) form a disordered region.

The protein belongs to the universal ribosomal protein uS9 family.

The chain is Small ribosomal subunit protein uS9 from Paenarthrobacter aurescens (strain TC1).